A 346-amino-acid polypeptide reads, in one-letter code: 36.4 kDa proline-rich protein (346 aa).

Positions 11-144 (PYPPSTPKHP…PFTPKPPSPI (134 aa)) are disordered. 3 stretches are compositionally biased toward pro residues: residues 25–42 (KVKPPSTQPPHVKPPSTP), 51–81 (VKPPSTPKQPPYVKPPTTPKHPPHVKPPSTP), and 89–144 (QKPC…PSPI).

This is 36.4 kDa proline-rich protein (TPRP-F1) from Solanum lycopersicum (Tomato).